A 557-amino-acid polypeptide reads, in one-letter code: Hemolysin transporter protein ShlB (557 aa).

Positions 1-18 (MIKKITALTLLVSTALSA) are cleaved as a signal peptide. Residues 79-152 (LPIAGVYLQG…GELGLSVTEG (74 aa)) form the POTRA domain.

It belongs to the TPS (TC 1.B.20) family.

The protein localises to the cell outer membrane. In terms of biological role, interacts with the cell-bound hemolysin. Necessary for the extracellular secretion and activation of hemolysin. Its function is as follows. Member of a two partner secretion pathway (TPS) in which it mediates the secretion of hemolysin. The sequence is that of Hemolysin transporter protein ShlB (shlB) from Serratia marcescens.